The chain runs to 403 residues: Serine/threonine transporter SstT (403 aa).

Transmembrane regions (helical) follow at residues 16–36, 45–65, 79–99, 138–158, 175–195, 214–234, 295–315, 327–347, and 353–373; these read QIVI…AIAL, FVSA…MASI, ILWL…VASM, ALLN…GVAL, GVTL…FGLV, LAVL…LIVF, MAGA…TLGI, MVAA…LLLI, and LFGI…IIGV.

Belongs to the dicarboxylate/amino acid:cation symporter (DAACS) (TC 2.A.23) family.

The protein localises to the cell inner membrane. It carries out the reaction L-serine(in) + Na(+)(in) = L-serine(out) + Na(+)(out). The catalysed reaction is L-threonine(in) + Na(+)(in) = L-threonine(out) + Na(+)(out). Involved in the import of serine and threonine into the cell, with the concomitant import of sodium (symport system). The polypeptide is Serine/threonine transporter SstT (Pseudomonas putida (strain W619)).